The sequence spans 343 residues: Ribosomal RNA small subunit methyltransferase C (343 aa).

It belongs to the methyltransferase superfamily. RsmC family. Monomer.

It is found in the cytoplasm. The catalysed reaction is guanosine(1207) in 16S rRNA + S-adenosyl-L-methionine = N(2)-methylguanosine(1207) in 16S rRNA + S-adenosyl-L-homocysteine + H(+). Specifically methylates the guanine in position 1207 of 16S rRNA in the 30S particle. This chain is Ribosomal RNA small subunit methyltransferase C, found in Escherichia coli O157:H7.